The primary structure comprises 207 residues: Protein N-terminal glutamine amidohydrolase (207 aa).

Catalysis depends on residues cysteine 30, histidine 83, and aspartate 99.

Belongs to the NTAQ1 family. Monomer.

The protein resides in the cytoplasm. It is found in the cytosol. Its subcellular location is the nucleus. It carries out the reaction N-terminal L-glutaminyl-[protein] + H2O = N-terminal L-glutamyl-[protein] + NH4(+). In terms of biological role, mediates the side-chain deamidation of N-terminal glutamine residues to glutamate, an important step in N-end rule pathway of protein degradation. Conversion of the resulting N-terminal glutamine to glutamate renders the protein susceptible to arginylation, polyubiquitination and degradation as specified by the N-end rule. Does not act on substrates with internal or C-terminal glutamine and does not act on non-glutamine residues in any position. Does not deaminate acetylated N-terminal glutamine. With the exception of proline, all tested second-position residues on substrate peptides do not greatly influence the activity. In contrast, a proline at position 2, virtually abolishes deamidation of N-terminal glutamine. This Rattus norvegicus (Rat) protein is Protein N-terminal glutamine amidohydrolase (Ntaq1).